A 255-amino-acid polypeptide reads, in one-letter code: Triosephosphate isomerase (255 aa).

A substrate-binding site is contributed by 10–12 (NWK). The active-site Electrophile is H96. E168 functions as the Proton acceptor in the catalytic mechanism. Substrate-binding positions include G174, S213, and 234-235 (GG).

The protein belongs to the triosephosphate isomerase family. In terms of assembly, homodimer.

It is found in the cytoplasm. It carries out the reaction D-glyceraldehyde 3-phosphate = dihydroxyacetone phosphate. The protein operates within carbohydrate biosynthesis; gluconeogenesis. It participates in carbohydrate degradation; glycolysis; D-glyceraldehyde 3-phosphate from glycerone phosphate: step 1/1. Involved in the gluconeogenesis. Catalyzes stereospecifically the conversion of dihydroxyacetone phosphate (DHAP) to D-glyceraldehyde-3-phosphate (G3P). The sequence is that of Triosephosphate isomerase from Histophilus somni (strain 129Pt) (Haemophilus somnus).